Reading from the N-terminus, the 1022-residue chain is Probable E3 ubiquitin-protein ligase HERC6 (1022 aa).

5 RCC1 repeats span residues 41 to 92 (NHRV…AVCH), 93 to 145 (KGRV…ALSK), 147 to 198 (SQVF…ALSL), 200 to 253 (GTSF…VLTQ), and 254 to 304 (DGKV…AYVH). Residues 693 to 1017 (EATDFCKVLV…INNNRGFVSP (325 aa)) enclose the HECT domain. Residue Cys-985 is the Glycyl thioester intermediate of the active site.

As to expression, detected in brain, heart, placenta and testis.

It localises to the cytoplasm. The protein resides in the cytosol. The catalysed reaction is S-ubiquitinyl-[E2 ubiquitin-conjugating enzyme]-L-cysteine + [acceptor protein]-L-lysine = [E2 ubiquitin-conjugating enzyme]-L-cysteine + N(6)-ubiquitinyl-[acceptor protein]-L-lysine.. The protein operates within protein modification; protein ubiquitination. Its function is as follows. E3 ubiquitin-protein ligase which accepts ubiquitin from an E2 ubiquitin-conjugating enzyme in the form of a thioester and then directly transfers the ubiquitin to targeted substrates. This chain is Probable E3 ubiquitin-protein ligase HERC6 (HERC6), found in Homo sapiens (Human).